The chain runs to 315 residues: Isoaspartyl peptidase/L-asparaginase 1 (315 aa).

Residue Ser169 is modified to Phosphoserine. Catalysis depends on Thr183, which acts as the Nucleophile. Substrate contacts are provided by residues 211 to 214 (RIGD) and 233 to 236 (TGKG).

The protein belongs to the Ntn-hydrolase family. As to quaternary structure, heterotetramer of two alpha and two beta chains arranged as a dimer of alpha/beta heterodimers. Cleaved into an alpha and beta chain by autocatalysis; this activates the enzyme. The N-terminal residue of the beta subunit is responsible for the nucleophile hydrolase activity.

The catalysed reaction is Cleavage of a beta-linked Asp residue from the N-terminus of a polypeptide.. Its function is as follows. Acts in asparagine catabolism but also in the final steps of protein and degradation via hydrolysis of a range of isoaspartyl dipeptides. The affinity for Asn and at least 4 isoaspartyl dipeptides (L-beta-Asp-Ala, L-beta-Asp-Gly, L-beta-Asp-Leu, L-beta-Asp-Phe) is quite low, KM being greater than 4.0 mM. The enzyme is inactive on alpha-aspartyl dipeptides. This Arabidopsis thaliana (Mouse-ear cress) protein is Isoaspartyl peptidase/L-asparaginase 1.